Consider the following 142-residue polypeptide: Large ribosomal subunit protein uL13 (142 aa).

It belongs to the universal ribosomal protein uL13 family. As to quaternary structure, part of the 50S ribosomal subunit.

This protein is one of the early assembly proteins of the 50S ribosomal subunit, although it is not seen to bind rRNA by itself. It is important during the early stages of 50S assembly. The chain is Large ribosomal subunit protein uL13 from Hydrogenovibrio crunogenus (strain DSM 25203 / XCL-2) (Thiomicrospira crunogena).